Reading from the N-terminus, the 701-residue chain is Elongation factor G (701 aa).

Positions 8–291 constitute a tr-type G domain; the sequence is SRYRNIGIVA…AVIDFLPAPT (284 aa). GTP is bound by residues 17 to 24, 89 to 93, and 143 to 146; these read AHVDAGKT, DTPGH, and NKMD.

It belongs to the TRAFAC class translation factor GTPase superfamily. Classic translation factor GTPase family. EF-G/EF-2 subfamily.

It localises to the cytoplasm. Its function is as follows. Catalyzes the GTP-dependent ribosomal translocation step during translation elongation. During this step, the ribosome changes from the pre-translocational (PRE) to the post-translocational (POST) state as the newly formed A-site-bound peptidyl-tRNA and P-site-bound deacylated tRNA move to the P and E sites, respectively. Catalyzes the coordinated movement of the two tRNA molecules, the mRNA and conformational changes in the ribosome. The polypeptide is Elongation factor G (Pseudomonas fluorescens (strain Pf0-1)).